The chain runs to 140 residues: uncharacterized protein (140 aa).

Residues 1 to 19 show a composition bias toward polar residues; sequence MGLCGSKTQPMPSQTTTVA. A disordered region spans residues 1-140; that stretch reads MGLCGSKTQP…ERERENMIYD (140 aa). Residue G2 is the site of N-myristoyl glycine attachment. C4 is lipidated: S-palmitoyl cysteine. Over residues 27–40 the composition is skewed to basic and acidic residues; sequence INRDTVKSKQELRH. Residues 41-51 are compositionally biased toward basic residues; it reads KEKKDKKKKTQ. Over residues 73 to 140 the composition is skewed to basic and acidic residues; sequence DPSKNKVSPK…ERERENMIYD (68 aa).

This sequence to S.pombe new13. In terms of processing, myristoylated. The N-myristoylated protein is further palmitoylated by ERF2, PFA4 and slightly by PFA5, but not by PFA3.

It localises to the cytoplasm. Its subcellular location is the cytosol. This is an uncharacterized protein from Saccharomyces cerevisiae (strain ATCC 204508 / S288c) (Baker's yeast).